The chain runs to 3133 residues: Cysteine repeat modular protein A (3133 aa).

A disordered region spans residues Met-1–Leu-39. The span at Thr-30–Leu-39 shows a compositional bias: basic and acidic residues. Residues Leu-123 to Ile-143 form a helical membrane-spanning segment. 2 stretches are compositionally biased toward basic and acidic residues: residues Thr-173–Glu-211 and Asn-301–Leu-311. 2 disordered regions span residues Thr-173 to Arg-234 and Val-294 to Ala-317. 3 N-linked (GlcNAc...) asparagine glycosylation sites follow: Asn-301, Asn-392, and Asn-470. Residues Asp-577–Asp-644 form the Kringle domain. 2 disulfide bridges follow: Cys-599/Cys-631 and Cys-620/Cys-643. Residues Asn-1364 and Asn-1532 are each glycosylated (N-linked (GlcNAc...) asparagine). 3 helical membrane passes run Met-2229–Val-2249, Leu-2276–Ile-2296, and Val-2339–Ile-2359. N-linked (GlcNAc...) asparagine glycosylation occurs at Asn-2369. The next 3 helical transmembrane spans lie at Ala-2420–Ser-2440, Val-2489–Leu-2509, and Trp-2539–Ile-2559. A glycan (N-linked (GlcNAc...) asparagine) is linked at Asn-2565. The chain crosses the membrane as a helical span at residues Val-2569–Phe-2589. N-linked (GlcNAc...) asparagine glycosylation occurs at Asn-2602. Helical transmembrane passes span Ile-2607–Val-2627 and Leu-2632–Phe-2652. 2 stretches are compositionally biased toward basic and acidic residues: residues Phe-2827 to Glu-2838 and Gln-3049 to Ile-3069. Disordered regions lie at residues Phe-2827–Leu-2847 and Gln-3049–Gly-3101. The stretch at Ser-2955 to Glu-3068 forms a coiled coil. Acidic residues predominate over residues Gly-3083–Ser-3094.

In terms of assembly, component of a complex, at least composed of cysteine repeat modular protein A (CRMPa), cysteine repeat modular protein B (CRMPb), micronemal protein 15 (MIC15) and thrombospondin type 1 domain-containing protein (TSP1).

The protein localises to the cell membrane. It localises to the endoplasmic reticulum. Its subcellular location is the golgi apparatus. Its function is as follows. Required for triggering rhoptry secretion. Plays a role in host cell invasion. The sequence is that of Cysteine repeat modular protein A from Toxoplasma gondii.